Reading from the N-terminus, the 110-residue chain is Large ribosomal subunit protein uL22 (110 aa).

This sequence belongs to the universal ribosomal protein uL22 family. In terms of assembly, part of the 50S ribosomal subunit.

In terms of biological role, this protein binds specifically to 23S rRNA; its binding is stimulated by other ribosomal proteins, e.g. L4, L17, and L20. It is important during the early stages of 50S assembly. It makes multiple contacts with different domains of the 23S rRNA in the assembled 50S subunit and ribosome. Functionally, the globular domain of the protein is located near the polypeptide exit tunnel on the outside of the subunit, while an extended beta-hairpin is found that lines the wall of the exit tunnel in the center of the 70S ribosome. In Solidesulfovibrio magneticus (strain ATCC 700980 / DSM 13731 / RS-1) (Desulfovibrio magneticus), this protein is Large ribosomal subunit protein uL22.